Reading from the N-terminus, the 484-residue chain is MKGSSVPRFVDRVVIHTRAGSGGNGCASVHREKFKPLGGPDGGNGGRGGSIVFVVDPQVHTLLDFHFRPHLTAASGKHGMGNNRDGAAGADLEVKVPEGTVVLDENGRLLADLVGAGTRFEAAAGGRGGLGNAALASRVRKAPGFALLGEKGQSRDLTLELKTVADVGLVGFPSAGKSSLVSAISAAKPKIADYPFTTLVPNLGVVSAGEHAFTVADVPGLIPGASRGRGLGLDFLRHIERCAVLVHVVDCATAEPGRDPISDIDALETELACYTPTLQGDAALGDLAARPRAVVLNKIDVPEARELAEFVRDDIAQRGWPVFCVSTATRENLQPLIFGLSQMISDYNAARPVAVPRRPVIRPIPVDDSGFTVEPDGHGGFVVSGARPERWIDQTNFDNDEAVGYLADRLARLGVEEELLRLGARSGCAVTIGEMTFDWEPQTPAGEPVAMSGRGTDPRLDSNKRVGAAERKAARSRRREHGDG.

Residues 7–164 (PRFVDRVVIH…RDLTLELKTV (158 aa)) form the Obg domain. The segment at 21-43 (SGGNGCASVHREKFKPLGGPDGG) is disordered. The OBG-type G domain occupies 165–345 (ADVGLVGFPS…LIFGLSQMIS (181 aa)). GTP-binding positions include 171–178 (GFPSAGKS), 196–200 (FTTLV), 217–220 (DVPG), 297–300 (NKID), and 326–328 (STA). Mg(2+) is bound by residues Ser-178 and Thr-198. The OCT domain maps to 363-441 (PIPVDDSGFT…IGEMTFDWEP (79 aa)). The tract at residues 439 to 484 (WEPQTPAGEPVAMSGRGTDPRLDSNKRVGAAERKAARSRRREHGDG) is disordered. Basic and acidic residues predominate over residues 456–473 (TDPRLDSNKRVGAAERKA). Residues 474-484 (ARSRRREHGDG) are compositionally biased toward basic residues.

It belongs to the TRAFAC class OBG-HflX-like GTPase superfamily. OBG GTPase family. In terms of assembly, monomer. Mg(2+) is required as a cofactor.

The protein resides in the cytoplasm. An essential GTPase which binds GTP, GDP and possibly (p)ppGpp with moderate affinity, with high nucleotide exchange rates and a fairly low GTP hydrolysis rate. Plays a role in control of the cell cycle, stress response, ribosome biogenesis and in those bacteria that undergo differentiation, in morphogenesis control. This is GTPase Obg from Mycobacterium tuberculosis (strain CDC 1551 / Oshkosh).